The sequence spans 1875 residues: Protein MLP1 (1875 aa).

An N-acetylserine modification is found at Ser2. Coiled coils occupy residues Glu69 to Leu487 and Glu531 to Ser1678. A Phosphothreonine modification is found at Thr337. Ser379 bears the Phosphoserine mark. The Required for nuclear localization signature appears at Gln1496–Ser1565. The disordered stretch occupies residues Lys1641–Pro1689. Residues Ser1667–Asn1688 are compositionally biased toward polar residues. Phosphoserine occurs at positions 1670 and 1710. Positions Lys1716–Gly1725 are enriched in low complexity. Residues Lys1716 to Ile1875 form a disordered region. Polar residues predominate over residues Pro1728 to His1737. Position 1733 is a phosphoserine (Ser1733). Residues Leu1738–Leu1748 show a composition bias toward basic and acidic residues. The segment covering Thr1787–Val1801 has biased composition (polar residues). Ser1803 is modified (phosphoserine). 2 stretches are compositionally biased toward basic and acidic residues: residues Thr1807–Lys1840 and Glu1865–Ile1875. Positions Asp1834 to Thr1866 form a coiled coil.

In terms of assembly, component of the nuclear pore complex (NPC). NPC constitutes the exclusive means of nucleocytoplasmic transport. NPCs allow the passive diffusion of ions and small molecules and the active, nuclear transport receptor-mediated bidirectional transport of macromolecules such as proteins, RNAs, ribonucleoparticles (RNPs), and ribosomal subunits across the nuclear envelope. Due to its 8-fold rotational symmetry, all subunits are present with 8 copies or multiples thereof. Interacts with NAB2, a hnRNP required for mRNA export. Interacts with MLP2. In terms of processing, may be phosphorylated by CDC28.

Its subcellular location is the nucleus. The protein localises to the nuclear pore complex. In terms of biological role, together with the closely related MLP2, involved in the structural and functional organization of perinuclear chromatin. Together with MLP2, associates with the nuclear pore complex and form filamentous structures along the nuclear periphery. Has a role in the localization of Esc1 to nucleolar regions. Together with MLP2, mediates tethering of the some telomeres to the nuclear periphery, probably mediated by YKU70/YKU80 (HDF1/HDF2) heterodimer and show perinuclear location dependent silencing. MLP1 and MLP2 are involved in telomere length regulation but not silencing or telomere anchoring. Recognizes the 5'-splice site of pre-mRNAs and retains unspliced pre-mRNA in the nucleus without affecting splicing itself. The protein is Protein MLP1 (MLP1) of Saccharomyces cerevisiae (strain ATCC 204508 / S288c) (Baker's yeast).